The chain runs to 82 residues: Penaeidin-3a (82 aa).

Positions 1 to 19 (MRLVVCLVFLASFALVCQG) are cleaved as a signal peptide. A Pyrrolidone carboxylic acid modification is found at glutamine 20. Disulfide bonds link cysteine 51/cysteine 66, cysteine 55/cysteine 73, and cysteine 67/cysteine 74. Position 81 is a serine amide (serine 81).

In terms of processing, the N-terminus forms pyrrolidone carboxylic acid. As to expression, higher expression in hemocytes and to a lesser extent in heart, testis, gills, intestine, lymphoid organ and hepatopancreas. Traces in eyes and subcuticular epithelium. Not present in the brain.

It localises to the cytoplasmic granule. Functionally, antibacterial activity against M.luteus and E.coli bacteria. Antifungal activity against N.crassa and F.oxysporum. Presents chitin-binding activity. The sequence is that of Penaeidin-3a from Penaeus vannamei (Whiteleg shrimp).